Consider the following 766-residue polypeptide: Darlin (766 aa).

4 ARM repeats span residues 82–119 (QLFEFLLPNGVETLNTDTTVEQSELFSMVCRLLGNLTY), 167–208 (DFIQ…NLVD), 423–464 (EPNC…NLTL), and 465–537 (PTIN…ASMD). The disordered stretch occupies residues 561–585 (EEKEKTIEKTDEKTDEKTNEKKQSK). Residues 610–649 (HQEKMKQLIEESVEPFFSLLQSPFPILQVEGAKGLVLLIK) form an ARM 5 repeat.

The protein belongs to the RAP1GDS1 family. As to quaternary structure, binds to small GTPases racE, racC but not rab21. Binds preferentially to GDP-bound racE.

In terms of biological role, part of a signaling pathway that initiates the aggregation and leads to the formation of aggregation centers or streams. Not essential for cytokinesis, pinocytosis or phagocytosis. Not essential for development, except in starvation-induced aggregation. In Dictyostelium discoideum (Social amoeba), this protein is Darlin (darA).